We begin with the raw amino-acid sequence, 53 residues long: UPF0391 membrane protein Bcen2424_6479 (53 aa).

2 helical membrane-spanning segments follow: residues 5-25 and 30-50; these read AIIF…GIAA and IAKI…LLGV.

The protein belongs to the UPF0391 family.

The protein resides in the cell membrane. The chain is UPF0391 membrane protein Bcen2424_6479 from Burkholderia cenocepacia (strain HI2424).